The chain runs to 326 residues: Malate dehydrogenase (326 aa).

Position 11-17 (11-17 (GAAGQIG)) interacts with NAD(+). 2 residues coordinate substrate: arginine 92 and arginine 98. NAD(+) contacts are provided by residues asparagine 105, glutamine 112, and 129 to 131 (VGN). Substrate is bound by residues asparagine 131 and arginine 162. Residue histidine 187 is the Proton acceptor of the active site.

The protein belongs to the LDH/MDH superfamily. MDH type 2 family.

It carries out the reaction (S)-malate + NAD(+) = oxaloacetate + NADH + H(+). Its function is as follows. Catalyzes the reversible oxidation of malate to oxaloacetate. This is Malate dehydrogenase from Alkalilimnicola ehrlichii (strain ATCC BAA-1101 / DSM 17681 / MLHE-1).